We begin with the raw amino-acid sequence, 1252 residues long: DNA-directed RNA polymerase subunit beta (1252 aa).

It belongs to the RNA polymerase beta chain family. In terms of assembly, the RNAP catalytic core consists of 2 alpha, 1 beta, 1 beta' and 1 omega subunit. When a sigma factor is associated with the core the holoenzyme is formed, which can initiate transcription.

The enzyme catalyses RNA(n) + a ribonucleoside 5'-triphosphate = RNA(n+1) + diphosphate. In terms of biological role, DNA-dependent RNA polymerase catalyzes the transcription of DNA into RNA using the four ribonucleoside triphosphates as substrates. This Chlamydia muridarum (strain MoPn / Nigg) protein is DNA-directed RNA polymerase subunit beta.